The sequence spans 324 residues: Transcriptional regulator protein Pur-beta (324 aa).

The segment at 1-47 (MADGDSGSERGGGGGGGGGPGGFQPAPRGGGGGGGGPGGEQETQELA) is disordered. Position 2 is an N-acetylalanine (alanine 2). A phosphoserine mark is found at serine 6 and serine 8. Positions 9-39 (ERGGGGGGGGGPGGFQPAPRGGGGGGGGPGG) are enriched in gly residues. Arginine 28 carries the post-translational modification Omega-N-methylarginine. Residues 37 to 263 (PGGEQETQEL…GVFLRVSEVK (227 aa)) are DNA-binding. Threonine 43 carries the phosphothreonine modification. Serine 113 carries the phosphoserine modification. Arginine 164 carries the post-translational modification Omega-N-methylarginine. Lysine 279 is modified (N6-acetyllysine). Residues 297–307 (RQRDKLYERRG) are compositionally biased toward basic and acidic residues. The disordered stretch occupies residues 297-324 (RQRDKLYERRGGGSGGGDESEGEEVDED). Arginine 306 carries the post-translational modification Omega-N-methylarginine. 2 positions are modified to phosphoserine: serine 310 and serine 316. The span at 314 to 324 (DESEGEEVDED) shows a compositional bias: acidic residues.

Belongs to the PUR DNA-binding protein family. Homodimer, heterodimer with PURA and heterotrimer with PURA and YBX1/Y-box protein 1. Interacts with MYOCD and SRF.

It localises to the nucleus. In terms of biological role, transcriptional regulator which can act as an activator or a repressor. Represses the transcription of ACTA2 in fibroblasts and smooth muscle cells via its ability to interact with the purine-rich strand of a MCAT-containing element in the 5' flanking region of the gene. Represses the transcription of MYOCD, capable of repressing all isoforms of MYOCD but the magnitude of the repressive effects is most notable for the SMC-specific isoforms. Promotes hepatic glucose production by activating the transcription of ADCY6, leading to cAMP accumulation, increased PKA activity, CREB activation, and increased transcription of PCK1 and G6PC genes. Has capacity to bind repeated elements in single-stranded DNA such as the purine-rich single strand of the PUR element located upstream of the MYC gene. Participates in transcriptional and translational regulation of alpha-MHC expression in cardiac myocytes by binding to the purine-rich negative regulatory (PNR) element. Modulates constitutive liver galectin-3 gene transcription by binding to its promoter. May play a role in the dendritic transport of a subset of mRNAs. This chain is Transcriptional regulator protein Pur-beta (Purb), found in Mus musculus (Mouse).